Here is a 378-residue protein sequence, read N- to C-terminus: Chloroplast stem-loop binding protein of 41 kDa b, chloroplastic (378 aa).

Residues 1 to 50 (MAKMMMLQQHQPSFSLLTSSLSDFNGAKLHLQVQYKRKVHQPKGALYVSA) constitute a chloroplast transit peptide. Phosphoserine is present on serine 240.

This sequence belongs to the NAD(P)-dependent epimerase/dehydratase family. As to quaternary structure, component of a complex made of CSP41A, CSP41B, ribosomes, and the plastid-encoded RNA polymerase. Interacts with CSP41A. Binds DNA when in complex with PRIN2. In terms of tissue distribution, highly expressed in seedlings, particularly in photosynthetically active organs. Mostly expressed in young and mature leaves, and, to a lower extent, in flowers. Low expression in etiolated seedlings compared to green seedlings.

It localises to the plastid. Its subcellular location is the chloroplast. The protein localises to the plastoglobule. It is found in the cytoplasm. Its function is as follows. Binds and cleaves RNA, particularly in stem-loops. Associates with pre-ribosomal particles in chloroplasts, and participates in chloroplast ribosomal RNA metabolism, probably during the final steps of 23S rRNA maturation. May enhance transcription by the plastid-encoded polymerase and translation in plastid via the stabilization of ribosome assembly intermediates. Required for chloroplast integrity. Involved in the regulation of the circadian system. Involved in the regulation of heteroglycans and monosaccharide mobilization. Required for full expression of genes transcribed by the plastid-encoded RNA polymerase (PEP). Essential for embryo development. This chain is Chloroplast stem-loop binding protein of 41 kDa b, chloroplastic (CSP41B), found in Arabidopsis thaliana (Mouse-ear cress).